Here is a 161-residue protein sequence, read N- to C-terminus: Endoribonuclease YbeY (161 aa).

Zn(2+)-binding residues include His120, His124, and Asp130.

It belongs to the endoribonuclease YbeY family. The cofactor is Zn(2+).

It is found in the cytoplasm. Its function is as follows. Single strand-specific metallo-endoribonuclease involved in late-stage 70S ribosome quality control and in maturation of the 3' terminus of the 16S rRNA. This chain is Endoribonuclease YbeY, found in Chlamydia trachomatis serovar A (strain ATCC VR-571B / DSM 19440 / HAR-13).